Here is a 324-residue protein sequence, read N- to C-terminus: Glyoxylate/hydroxypyruvate reductase B (324 aa).

Residues Arg-237 and Glu-266 contribute to the active site. His-285 acts as the Proton donor in catalysis.

Belongs to the D-isomer specific 2-hydroxyacid dehydrogenase family. GhrB subfamily. In terms of assembly, homodimer.

The protein resides in the cytoplasm. It catalyses the reaction glycolate + NADP(+) = glyoxylate + NADPH + H(+). The enzyme catalyses (R)-glycerate + NAD(+) = 3-hydroxypyruvate + NADH + H(+). The catalysed reaction is (R)-glycerate + NADP(+) = 3-hydroxypyruvate + NADPH + H(+). Functionally, catalyzes the NADPH-dependent reduction of glyoxylate and hydroxypyruvate into glycolate and glycerate, respectively. This chain is Glyoxylate/hydroxypyruvate reductase B, found in Shigella flexneri.